The chain runs to 457 residues: D(1B) dopamine receptor (457 aa).

Residues 1–41 (MYQPFQHLDSDQVASWQSPEMLMNKSVSRESQRRKELVAGQ) lie on the Extracellular side of the membrane. A glycan (N-linked (GlcNAc...) asparagine) is linked at N24. Residues 42–67 (IVTGSLLLLLIFWTLFGNILVCTAVM) form a helical membrane-spanning segment. Topologically, residues 68 to 78 (RFRHLRSRVTN) are cytoplasmic. Residues 79-105 (IFIVSLAVSDLLVALLVMPWKAVAEVA) form a helical membrane-spanning segment. Over 106–114 (GHWPFGAFC) the chain is Extracellular. C114 and C199 are oxidised to a cystine. A helical transmembrane segment spans residues 115 to 137 (DIWVAFDIMCSTASILNLCVISV). Topologically, residues 138-156 (DRYWAISSPFRYERKMTQR) are cytoplasmic. The chain crosses the membrane as a helical span at residues 157–181 (VALLMISTAWALSVLISFIPVQLSW). The Extracellular segment spans residues 182-205 (HKSETEDHLLSNHSTGNCDSSLNR). Residues 206–231 (TYAISSSLISFYIPVAIMIVTYTRIY) traverse the membrane as a helical segment. Topologically, residues 232–282 (RIAQIQIKRISTLERAAEHAQSCRSNRVDSCSRHHQTSLRTSIKKETKVLK) are cytoplasmic. A helical membrane pass occupies residues 283 to 309 (TLSIIMGVFVCCWLPFFILNCMVPFCD). Over 310–326 (RSPGHPQAGLPCVSETT) the chain is Extracellular. Residues 327–351 (FDIFVWFGWANSSLNPIIYAFNADF) traverse the membrane as a helical segment. The Cytoplasmic segment spans residues 352–457 (RKVFSSLLGC…ITPSMSNGIH (106 aa)). C361 carries S-palmitoyl cysteine lipidation.

The protein belongs to the G-protein coupled receptor 1 family. As to expression, brain and kidney.

The protein localises to the cell membrane. Functionally, dopamine receptor whose activity is mediated by G proteins which activate adenylyl cyclase. The protein is D(1B) dopamine receptor (drd5) of Xenopus laevis (African clawed frog).